We begin with the raw amino-acid sequence, 380 residues long: Flagellar P-ring protein (380 aa).

The signal sequence occupies residues 1-35 (MRFFTQSPFPLRTLTRRLTAFVCVGLLLLPGFTLA).

This sequence belongs to the FlgI family. As to quaternary structure, the basal body constitutes a major portion of the flagellar organelle and consists of four rings (L,P,S, and M) mounted on a central rod.

It is found in the periplasm. Its subcellular location is the bacterial flagellum basal body. Its function is as follows. Assembles around the rod to form the L-ring and probably protects the motor/basal body from shearing forces during rotation. This chain is Flagellar P-ring protein, found in Gluconobacter oxydans (strain 621H) (Gluconobacter suboxydans).